Here is a 148-residue protein sequence, read N- to C-terminus: Large ribosomal subunit protein bL9 (148 aa).

This sequence belongs to the bacterial ribosomal protein bL9 family.

In terms of biological role, binds to the 23S rRNA. In Listeria innocua serovar 6a (strain ATCC BAA-680 / CLIP 11262), this protein is Large ribosomal subunit protein bL9.